Reading from the N-terminus, the 235-residue chain is Hydroxyacylglutathione hydrolase (235 aa).

7 residues coordinate Zn(2+): His-53, His-55, Asp-57, His-58, His-109, Asp-127, and His-165.

This sequence belongs to the metallo-beta-lactamase superfamily. Glyoxalase II family. Monomer. The cofactor is Zn(2+).

It carries out the reaction an S-(2-hydroxyacyl)glutathione + H2O = a 2-hydroxy carboxylate + glutathione + H(+). It participates in secondary metabolite metabolism; methylglyoxal degradation; (R)-lactate from methylglyoxal: step 2/2. Thiolesterase that catalyzes the hydrolysis of S-D-lactoyl-glutathione to form glutathione and D-lactic acid. This Actinobacillus pleuropneumoniae serotype 7 (strain AP76) protein is Hydroxyacylglutathione hydrolase.